The chain runs to 310 residues: Olfactory receptor 5T7 (310 aa).

Topologically, residues 1 to 23 are extracellular; that stretch reads MENITEVTEFILMGFTDNADLEI. Residue Asn-3 is glycosylated (N-linked (GlcNAc...) asparagine). Residues 24-44 form a helical membrane-spanning segment; that stretch reads LSFFLFLAIYLFTLMGNLGLI. Residues 45 to 52 lie on the Cytoplasmic side of the membrane; the sequence is TLVIGDSR. Residues 53 to 73 traverse the membrane as a helical segment; it reads LHNPMYYFLSVLSSVDACYST. The Extracellular segment spans residues 74–97; the sequence is VITPQMVVDFVSEKKVISFIGCAT. A disulfide bridge connects residues Cys-95 and Cys-187. Residues 98–118 form a helical membrane-spanning segment; it reads QMFLAVTFGTTECFLLAAMAY. The Cytoplasmic segment spans residues 119–131; it reads DRYVAIHNPLMYV. Residues 132–152 form a helical membrane-spanning segment; that stretch reads VSMSPRVYVPLIIASYAGGIL. The Extracellular portion of the chain corresponds to 153-194; sequence HAVIHTVATFRLSFCGSNKISHIFCDIPPLLAISCSDTHFNQ. A helical membrane pass occupies residues 195-215; that stretch reads LLLFYCAGFIEVVTILIVLLS. Over 216–235 the chain is Cytoplasmic; the sequence is YGFILSVILKTRSTEGKRKV. A helical transmembrane segment spans residues 236 to 256; that stretch reads FSTCGSHLMAVSTFHGTVLFM. Over 257–269 the chain is Extracellular; that stretch reads YVRPSDSYALEHD. Residues 270-290 traverse the membrane as a helical segment; the sequence is MMVSIFYSIVIPMLNPLIYSL. Residues 291 to 310 are Cytoplasmic-facing; the sequence is RNKDVKEAIKKVFGKRILCG.

Belongs to the G-protein coupled receptor 1 family.

The protein localises to the cell membrane. In terms of biological role, potential odorant receptor. This chain is Olfactory receptor 5T7, found in Mus musculus (Mouse).